The sequence spans 326 residues: Putative ribose-phosphate pyrophosphokinase 2 (326 aa).

ATP is bound by residues 43-45 (DGE) and 102-103 (RQ). Position 136 (H136) interacts with Mg(2+). Residues D225 and 229–233 (NTGKT) contribute to the D-ribose 5-phosphate site.

It belongs to the ribose-phosphate pyrophosphokinase family. Class I subfamily. As to quaternary structure, homohexamer. Mg(2+) is required as a cofactor.

The protein localises to the cytoplasm. It catalyses the reaction D-ribose 5-phosphate + ATP = 5-phospho-alpha-D-ribose 1-diphosphate + AMP + H(+). The protein operates within metabolic intermediate biosynthesis; 5-phospho-alpha-D-ribose 1-diphosphate biosynthesis; 5-phospho-alpha-D-ribose 1-diphosphate from D-ribose 5-phosphate (route I): step 1/1. Involved in the biosynthesis of the central metabolite phospho-alpha-D-ribosyl-1-pyrophosphate (PRPP) via the transfer of pyrophosphoryl group from ATP to 1-hydroxyl of ribose-5-phosphate (Rib-5-P). This chain is Putative ribose-phosphate pyrophosphokinase 2, found in Streptococcus pyogenes serotype M18 (strain MGAS8232).